Consider the following 580-residue polypeptide: Cleavage stimulation factor subunit 2 (580 aa).

Serine 14 bears the Phosphoserine mark. In terms of domain architecture, RRM spans 16 to 94 (RSVFVGNIPY…RALRVDNAAS (79 aa)). Positions 108–248 (APVIESPYGE…VNGAPPMMQA (141 aa)) are interactions with CSTF3 and SYMPK. Residue lysine 189 forms a Glycyl lysine isopeptide (Lys-Gly) (interchain with G-Cter in SUMO2) linkage. An Omega-N-methylarginine modification is found at arginine 308. 2 disordered regions span residues 311 to 331 (LPTN…DPRG) and 347 to 414 (LGPP…RGLD). Basic and acidic residues-rich tracts occupy residues 363 to 376 (PGHE…HDMR) and 405 to 414 (RGGRDPRGLD). Residues 413 to 417 (LDARG) form a 1; approximate repeat. The interval 413-472 (LDARGMEARAMEARGLDARGLEARAMEARAMEARAMEARAMEARAMEARAMEARGMDTRG) is 12 X 5 AA tandem repeats of M-E-A-R-[AG]. A run of 2 repeats spans residues 418–422 (MEARA) and 423–427 (MEARG). The stretch at 428–432 (LDARG) is one 4; approximate repeat. The stretch at 433–437 (LEARA) is one 5; approximate repeat. Tandem repeats lie at residues 438–442 (MEARA), 443–447 (MEARA), 448–452 (MEARA), 453–457 (MEARA), 458–462 (MEARA), and 463–467 (MEARG). One copy of the 12; approximate repeat lies at 468-472 (MDTRG). An omega-N-methylarginine mark is found at arginine 471 and arginine 478. The interval 512–536 (MQGASMQGGSQPGGFSPGQSQVTPQ) is disordered. An interaction with RPO2TC1 region spans residues 517–580 (MQGGSQPGGF…EQIQKSTGAP (64 aa)). Serine 521 and serine 527 each carry phosphoserine.

The CSTF complex is composed of CSTF1 (50 kDa subunit), CSTF2 (64 kDa subunit) and CSTF3 (77 kDa subunit). CSTF2 directly interacts with CSTF3, SYMPK and RPO2TC1. Interacts with HSF1 in heat-stressed cells. Interacts with CPSF2, CPSF3 and FIP1L1. Interacts with DDX1. As to expression, expressed in most somatic cell types (at protein level). Highly expressed in testis, except in meiotic spermatocytes.

The protein localises to the nucleus. One of the multiple factors required for polyadenylation and 3'-end cleavage of mammalian pre-mRNAs. This subunit is directly involved in the binding to pre-mRNAs. This is Cleavage stimulation factor subunit 2 (Cstf2) from Mus musculus (Mouse).